Here is a 335-residue protein sequence, read N- to C-terminus: Mevalonate kinase (335 aa).

ATP is bound at residue 111–121; it reads PVGAGLGSSAA. Asp162 serves as the catalytic Proton acceptor.

Belongs to the GHMP kinase family. Mevalonate kinase subfamily. In terms of assembly, homodimer. Mg(2+) is required as a cofactor.

It is found in the cytoplasm. The enzyme catalyses (R)-mevalonate + ATP = (R)-5-phosphomevalonate + ADP + H(+). The protein operates within isoprenoid biosynthesis; isopentenyl diphosphate biosynthesis via mevalonate pathway; isopentenyl diphosphate from (R)-mevalonate: step 1/3. Its function is as follows. Catalyzes the phosphorylation of (R)-mevalonate (MVA) to (R)-mevalonate 5-phosphate (MVAP). Functions in the mevalonate (MVA) pathway leading to isopentenyl diphosphate (IPP), a key precursor for the biosynthesis of isoprenoid compounds such as archaeal membrane lipids. This chain is Mevalonate kinase, found in Pyrococcus abyssi (strain GE5 / Orsay).